A 459-amino-acid chain; its full sequence is MFS-type transporter SLC18B1 (459 aa).

Methionine 1 is modified (N-acetylmethionine). Positions methionine 1–alanine 10 are enriched in low complexity. Residues methionine 1–arginine 27 are disordered. Residues methionine 1–glutamine 33 are Cytoplasmic-facing. A Phosphoserine modification is found at serine 21. The helical transmembrane segment at isoleucine 34–leucine 54 threads the bilayer. The Extracellular portion of the chain corresponds to glycine 55–threonine 70. Residues methionine 71–glycine 91 form a helical membrane-spanning segment. The Cytoplasmic portion of the chain corresponds to lysine 92 to lysine 100. Residues phenylalanine 101–aspartate 121 traverse the membrane as a helical segment. Topologically, residues glutamine 122–proline 127 are extracellular. Residues isoleucine 128 to isoleucine 148 traverse the membrane as a helical segment. At threonine 149 to methionine 167 the chain is on the cytoplasmic side. The chain crosses the membrane as a helical span at residues glycine 168–leucine 188. At tyrosine 189 to glutamate 195 the chain is on the extracellular side. A helical membrane pass occupies residues valine 196–leucine 216. The Cytoplasmic portion of the chain corresponds to proline 217–threonine 235. Residues leucine 236–leucine 256 form a helical membrane-spanning segment. Residues aspartate 257 to tyrosine 274 lie on the Extracellular side of the membrane. A helical membrane pass occupies residues valine 275 to leucine 295. Topologically, residues leucine 296 to tryptophan 306 are cytoplasmic. The chain crosses the membrane as a helical span at residues leucine 307–leucine 327. The Extracellular portion of the chain corresponds to leucine 328 to glutamine 333. A helical membrane pass occupies residues leucine 334–proline 354. Topologically, residues threonine 355–serine 379 are cytoplasmic. The chain crosses the membrane as a helical span at residues glycine 380–leucine 400. Over cysteine 401–alanine 409 the chain is Extracellular. The chain crosses the membrane as a helical span at residues alanine 410–tryptophan 430. Residues glutamate 431–threonine 459 lie on the Cytoplasmic side of the membrane. The disordered stretch occupies residues lysine 440–threonine 459.

This sequence belongs to the major facilitator superfamily. In terms of tissue distribution, widely expressed, with highest expression in the lung, pancreas and kidney. High expression in the CNS, particularly in the hypothalamus, the thalamus and the cerebellum. In the forebrain, abundantly expressed in the telencephalon, especially in the cerebral cortex layers, except layer 1, as well as in the induseum griseum, the piriform area, the taenia tecta, dorsal part and in the entorhinal area, lateral part. Lower levels in the bed anterior olfactory nucleus, posteroventral part and in layer two of the olfactory tubercle. In the amygdala, high levels observed in the intercalated nucleus and the medial nucleus. In the diencephalon, expressed in the nuclei in both the hypothalamus and thalamus. Among the hypothalamic areas, strongest expression in the arcuate nucleus and in the ventromedial nucleus, as well as in the suprachiasmatic nucleus, anterior nucleus, especially in its central part, and in the magnocellular division of the paraventricular nucleus. In the thalamus, highest levels in the medial habenula. Expression also observed in the paraventricular thalamic nucleus, parataenial nucleus, central medial nucleus, intermediodorsal nucleus and lateral dorsal nucleus. In the hindbrain, detected in the cerebellum and in the pons. In the midbrain and the medulla, expression levels were modest. In the midbrain, highest expression in the periaqueductal gray and all subdivisions of the interpeduncular nucleus, except for the caudal part. In the pons, the strongest labeling was seen in the nucleus incertus and in the tegmental nucleus. Expressed in bone marrow-derived mast cells (at protein level).

It localises to the cytoplasmic vesicle. The protein localises to the secretory vesicle membrane. The protein resides in the secretory vesicle. Its subcellular location is the synaptic vesicle membrane. The catalysed reaction is spermine(in) + n H(+)(out) = spermine(out) + n H(+)(in). The enzyme catalyses spermidine(in) + n H(+)(out) = spermidine(out) + n H(+)(in). It carries out the reaction serotonin(in) + n H(+)(out) = serotonin(out) + n H(+)(in). Its function is as follows. Proton-coupled polyamine antiporter involved in the translocation of polyamines from cytosol into secretory vesicles prior to their release via exocytosis. Uses the electrochemical proton gradient generated by a V-type proton-pumping ATPase to couple the efflux of protons with the uptake of a polyamine molecule. Facilitates vesicular storage of spermine and spermidine in astrocytes with an impact on glutamatergic neuronal transmission and memory formation. Upon antigen stimulation, regulates polyamine accumulation and release in mast cell secretory granules, which in turn potentiates mast cell degranulation and histamine secretion. This chain is MFS-type transporter SLC18B1, found in Mus musculus (Mouse).